The sequence spans 55 residues: MAKPTTIKIRLNSTAGTGYFYVTKKNARTMTEKLVLKKYDPVARKHVDFKEAKIK.

The protein belongs to the bacterial ribosomal protein bL33 family.

The chain is Large ribosomal subunit protein bL33 from Maricaulis maris (strain MCS10) (Caulobacter maris).